Reading from the N-terminus, the 707-residue chain is Transcription factor 12 (707 aa).

The interval 25 to 109 (AMFSPPVNSG…TPFMNSNLIG (85 aa)) is disordered. Polar residues-rich tracts occupy residues 30 to 48 (PVNS…QFSG) and 56 to 76 (GTTS…SRGF). S47, S67, and S79 each carry phosphoserine. Over residues 81–93 (HYSDHLNDSRLGT) the composition is skewed to basic and acidic residues. A Phosphoserine modification is found at S98. A Glycyl lysine isopeptide (Lys-Gly) (interchain with G-Cter in SUMO2) cross-link involves residue K110. S116 and S124 each carry phosphoserine. Residues 119 to 140 (LYSRDSGLSGCQSSLLRQDLGL) are leucine-zipper. 2 disordered regions span residues 140–222 (LGSP…SMFA) and 249–313 (FGGI…ASHT). Residues 144 to 163 (AQLSSSGKPGTPYYSFSATS) show a composition bias toward polar residues. K181 participates in a covalent cross-link: Glycyl lysine isopeptide (Lys-Gly) (interchain with G-Cter in SUMO2). The segment covering 256 to 269 (STSHMSQSSSYGSL) has biased composition (low complexity). The span at 282 to 306 (VSPTDINTSLPPMSSFHRGSTSSSP) shows a compositional bias: polar residues. Phosphothreonine is present on T313. S333 bears the Phosphoserine mark. Disordered regions lie at residues 349 to 393 (PDHT…YENS) and 521 to 605 (HKTP…ERRM). Residues 352–363 (TSSSFPSNPSTP) are compositionally biased toward low complexity. Polar residues-rich tracts occupy residues 364–377 (VGSP…TSQW) and 384–393 (APSSPSYENS). Composition is skewed to basic and acidic residues over residues 543 to 555 (IKTE…ENLH) and 561 to 576 (DDMK…DIKV). A Glycyl lysine isopeptide (Lys-Gly) (interchain with G-Cter in SUMO2) cross-link involves residue K544. S565 carries the post-translational modification Phosphoserine. A Glycyl lysine isopeptide (Lys-Gly) (interchain with G-Cter in SUMO2) cross-link involves residue K575. Phosphothreonine is present on T582. Phosphoserine occurs at positions 583 and 584. The segment covering 593–605 (PEQKIEREKERRM) has biased composition (basic and acidic residues). Positions 602–655 (ERRMANNARERLRVRDINEAFKELGRMCQLHLKSEKPQTKLLILHQAVAVILSL) constitute a bHLH domain. Glycyl lysine isopeptide (Lys-Gly) (interchain with G-Cter in SUMO2) cross-links involve residues K634 and K678. The class A specific domain stretch occupies residues 657–680 (QQVRERNLNPKAACLKRREEEKVS). The disordered stretch occupies residues 675–707 (EEEKVSAASAEPPTTLPGTHPGLSETTNPMGHL). Residues 686-697 (PPTTLPGTHPGL) show a composition bias toward low complexity. Polar residues predominate over residues 698-707 (SETTNPMGHL).

In terms of assembly, efficient DNA binding requires dimerization with another bHLH protein. Forms homo- or heterooligomers with myogenin, E12 and ITF2 proteins. Interacts with PTF1. Interacts with RUNX1T1. Interacts with NEUROD2. Interacts with BHLHA9. In terms of tissue distribution, isoform gamma is highly expressed in lung, kidney, spleen, and is expressed at reduced levels in heart, muscle, liver, pituitary, brain and the trigeminal ganglion. The expression of isoform alpha predominates over isoform gamma in the pituitary and the brain.

Its subcellular location is the nucleus. Functionally, transcriptional regulator. Involved in the initiation of neuronal differentiation. Activates transcription by binding to the E box (5'-CANNTG-3'). May be involved in the functional network that regulates the development of the GnRH axis. The protein is Transcription factor 12 (Tcf12) of Rattus norvegicus (Rat).